Here is a 79-residue protein sequence, read N- to C-terminus: Dolichyl-diphosphooligosaccharide--protein glycosyltransferase subunit TMEM258 (79 aa).

A run of 2 helical transmembrane segments spans residues 19–39 (PLLT…FTMI) and 55–75 (FIAA…LLWV).

The protein belongs to the OST5 family. As to quaternary structure, component of the oligosaccharyltransferase (OST) complex.

Its subcellular location is the membrane. The protein operates within protein modification; protein glycosylation. Its function is as follows. Subunit of the oligosaccharyl transferase (OST) complex that catalyzes the initial transfer of a defined glycan (Glc(3)Man(9)GlcNAc(2) in eukaryotes) from the lipid carrier dolichol-pyrophosphate to an asparagine residue within an Asn-X-Ser/Thr consensus motif in nascent polypeptide chains, the first step in protein N-glycosylation. N-glycosylation occurs cotranslationally and the complex associates with the Sec61 complex at the channel-forming translocon complex that mediates protein translocation across the endoplasmic reticulum (ER). All subunits are required for a maximal enzyme activity. This chain is Dolichyl-diphosphooligosaccharide--protein glycosyltransferase subunit TMEM258, found in Caenorhabditis elegans.